Reading from the N-terminus, the 285-residue chain is RING finger protein 223 (285 aa).

The segment at Cys81–Arg132 adopts an RING-type zinc-finger fold. The chain crosses the membrane as a helical span at residues Val230 to Cys250.

It localises to the membrane. This Mus musculus (Mouse) protein is RING finger protein 223 (Rnf223).